Consider the following 367-residue polypeptide: Trans-enoyl reductase opdC (367 aa).

Residues 47 to 50 (YDAK), 199 to 202 (SPHN), Tyr-217, 264 to 265 (LD), and 353 to 354 (IT) each bind NADP(+).

It belongs to the zinc-containing alcohol dehydrogenase family. Monomer.

The protein operates within secondary metabolite biosynthesis. Its function is as follows. Trans-enoyl reductase; part of the gene cluster that mediates the biosynthesis of oxopyrrolidines, polyketide-amino acid hybrid compounds with feature structures of tetramic acid. The polyketide chain is first assembled by the highly reducing PKS module of opdA using acetyl-CoA as the starter unit and five malonyl-CoA as the extender units. OpdC acts as a trans-acting enoyl reductase and reduces the terminal alkenyl to alkane. The 17R in oxopyrrolidine A and 15R, 17S in oxopyrrolidine B are generated by non-stereospecific catalysis of the ketoreductase (KR) domain and enoyl reductases. Then the polyketides with specific configurations are transferred to the NRPS module of opdA and linked to L-tyrosine to form an amide bond. Finally, the oxopyrrolidines are offloaded through a Dieckmann cyclization catalyzed by the terminal D domain to give a tetramic acid moiety. The polypeptide is Trans-enoyl reductase opdC (Penicillium oxalicum (strain 114-2 / CGMCC 5302) (Penicillium decumbens)).